We begin with the raw amino-acid sequence, 266 residues long: Undecaprenyl-diphosphatase 3 (266 aa).

8 helical membrane passes run 4 to 24 (IEAFKALFLGFIEGLTEFLPI), 43 to 63 (SGRAFEVVIQLGAILAVCWLY), 86 to 106 (FSVLMAFFPAVIIGVLAVDFI), 109 to 129 (VLFSPLVVAIALIIGGLIIFW), 145 to 165 (ITFKQAIAVGFIQCLAMIPGT), 186 to 206 (TEFSFFLAMPTMLGAATYDLL), 219 to 239 (NIGLGFITAFISALFVVKALV), and 246 to 266 (TLRVFAWYRIVLGIIIMFVML).

Belongs to the UppP family.

The protein resides in the cell inner membrane. The catalysed reaction is di-trans,octa-cis-undecaprenyl diphosphate + H2O = di-trans,octa-cis-undecaprenyl phosphate + phosphate + H(+). In terms of biological role, catalyzes the dephosphorylation of undecaprenyl diphosphate (UPP). Confers resistance to bacitracin. In Acinetobacter baylyi (strain ATCC 33305 / BD413 / ADP1), this protein is Undecaprenyl-diphosphatase 3.